The chain runs to 511 residues: Lysine--tRNA ligase (511 aa).

Mg(2+) contacts are provided by Glu-403 and Glu-410.

This sequence belongs to the class-II aminoacyl-tRNA synthetase family. In terms of assembly, homodimer. Mg(2+) serves as cofactor.

The protein resides in the cytoplasm. It carries out the reaction tRNA(Lys) + L-lysine + ATP = L-lysyl-tRNA(Lys) + AMP + diphosphate. This is Lysine--tRNA ligase from Onion yellows phytoplasma (strain OY-M).